Here is a 540-residue protein sequence, read N- to C-terminus: MNNLTSTKFIFVTGGVVSSLGKGLAAASIGALLQARGFKICLRKLDPYLNIDPGTMSPIQHGEVFVTDDGAETDLDLGHYERFTGVKTTKNDNITTGKVYHNLLSKERKGDYLGQTVQIIPHVTDLINSFILYNTDALDFVICEIGGTVGDIESQPFLESIRQIGYKLSKNNTVFVHLTLVPYISATMELKTKPTQHSVKELSSVGIQPDIILYRSKIPLSQEQRDKIANLCNVSPTNIIPALDVKNIYELPISYHQYNLDTQILKHFNITSPEPNLDKWENILNISHISTKTITIAIIGKYIKLLDAYKSLIEALEHAAIHNKTKLSIHWIDSRSLNNEITNTFDNVHAILIPGGFGDDGVEGKIIAIKYARINNIPFLGICMGMQLAIIEFVRNVIHLEDANSTEFNFYCKNPVIHQLPELQQNLGGSMKLGSHPCYLKVDSKIFSIYKEQVINERRRHRYTVNLQYKDLLESHGLIFTGHSHHNNNDSLAEVIELKNHPWFIGVQFHPEFKSDPFQSHPLFMSFVQASLNYQETKKA.

An amidoligase domain region spans residues Met1–Ile270. Ser18 serves as a coordination point for CTP. Residue Ser18 participates in UTP binding. ATP is bound by residues Ser19 to Leu24 and Asp76. The Mg(2+) site is built by Asp76 and Glu144. CTP is bound by residues Asp151 to Glu153, Lys191 to Gln196, and Lys227. UTP is bound by residues Lys191–Gln196 and Lys227. Residues Thr295–Thr537 enclose the Glutamine amidotransferase type-1 domain. Gly356 serves as a coordination point for L-glutamine. Cys383 (nucleophile; for glutamine hydrolysis) is an active-site residue. L-glutamine-binding positions include Met384–Gln387, Glu407, and Arg462. Residues His510 and Glu512 contribute to the active site.

Belongs to the CTP synthase family. Homotetramer.

The catalysed reaction is UTP + L-glutamine + ATP + H2O = CTP + L-glutamate + ADP + phosphate + 2 H(+). The enzyme catalyses L-glutamine + H2O = L-glutamate + NH4(+). It catalyses the reaction UTP + NH4(+) + ATP = CTP + ADP + phosphate + 2 H(+). It functions in the pathway pyrimidine metabolism; CTP biosynthesis via de novo pathway; CTP from UDP: step 2/2. Its activity is regulated as follows. Allosterically activated by GTP, when glutamine is the substrate; GTP has no effect on the reaction when ammonia is the substrate. The allosteric effector GTP functions by stabilizing the protein conformation that binds the tetrahedral intermediate(s) formed during glutamine hydrolysis. Inhibited by the product CTP, via allosteric rather than competitive inhibition. Functionally, catalyzes the ATP-dependent amination of UTP to CTP with either L-glutamine or ammonia as the source of nitrogen. Regulates intracellular CTP levels through interactions with the four ribonucleotide triphosphates. The polypeptide is CTP synthase (Ehrlichia ruminantium (strain Welgevonden)).